Reading from the N-terminus, the 535-residue chain is Peptide chain release factor 3 (535 aa).

One can recognise a tr-type G domain in the interval A8–R278. GTP-binding positions include S17–T24, D85–H89, and N139–D142.

Belongs to the TRAFAC class translation factor GTPase superfamily. Classic translation factor GTPase family. PrfC subfamily.

Its subcellular location is the cytoplasm. In terms of biological role, increases the formation of ribosomal termination complexes and stimulates activities of RF-1 and RF-2. It binds guanine nucleotides and has strong preference for UGA stop codons. It may interact directly with the ribosome. The stimulation of RF-1 and RF-2 is significantly reduced by GTP and GDP, but not by GMP. This is Peptide chain release factor 3 from Bordetella parapertussis (strain 12822 / ATCC BAA-587 / NCTC 13253).